A 346-amino-acid chain; its full sequence is Flap endonuclease 1 (346 aa).

An N-domain region spans residues Met1–Lys102. Positions 31, 84, 156, 158, 177, 179, and 239 each coordinate Mg(2+). The segment at Glu120–Gly261 is I-domain.

Belongs to the XPG/RAD2 endonuclease family. FEN1 subfamily. Interacts with PCNA. PCNA stimulates the nuclease activity without altering cleavage specificity. The cofactor is Mg(2+).

Structure-specific nuclease with 5'-flap endonuclease and 5'-3' exonuclease activities involved in DNA replication and repair. During DNA replication, cleaves the 5'-overhanging flap structure that is generated by displacement synthesis when DNA polymerase encounters the 5'-end of a downstream Okazaki fragment. Binds the unpaired 3'-DNA end and kinks the DNA to facilitate 5' cleavage specificity. Cleaves one nucleotide into the double-stranded DNA from the junction in flap DNA, leaving a nick for ligation. Also involved in the base excision repair (BER) pathway. Acts as a genome stabilization factor that prevents flaps from equilibrating into structures that lead to duplications and deletions. Also possesses 5'-3' exonuclease activity on nicked or gapped double-stranded DNA. This Pyrobaculum arsenaticum (strain DSM 13514 / JCM 11321 / PZ6) protein is Flap endonuclease 1.